Consider the following 265-residue polypeptide: Hydroxyethylthiazole kinase (265 aa).

Met44 contributes to the substrate binding site. The ATP site is built by Lys120 and Ser166. Gly193 contacts substrate.

This sequence belongs to the Thz kinase family. Requires Mg(2+) as cofactor.

The catalysed reaction is 5-(2-hydroxyethyl)-4-methylthiazole + ATP = 4-methyl-5-(2-phosphooxyethyl)-thiazole + ADP + H(+). Its pathway is cofactor biosynthesis; thiamine diphosphate biosynthesis; 4-methyl-5-(2-phosphoethyl)-thiazole from 5-(2-hydroxyethyl)-4-methylthiazole: step 1/1. Functionally, catalyzes the phosphorylation of the hydroxyl group of 4-methyl-5-beta-hydroxyethylthiazole (THZ). This is Hydroxyethylthiazole kinase from Methanosphaerula palustris (strain ATCC BAA-1556 / DSM 19958 / E1-9c).